The chain runs to 1081 residues: Isoleucine--tRNA ligase (1081 aa).

The 'HIGH' region motif lies at 53–63 (PFATGLPHYGN). The 'KMSKS' region motif lies at 607 to 611 (KMSKS). Position 610 (lysine 610) interacts with ATP.

This sequence belongs to the class-I aminoacyl-tRNA synthetase family.

The enzyme catalyses tRNA(Ile) + L-isoleucine + ATP = L-isoleucyl-tRNA(Ile) + AMP + diphosphate. This Tetrahymena thermophila protein is Isoleucine--tRNA ligase (ILSA).